We begin with the raw amino-acid sequence, 477 residues long: Ribulose bisphosphate carboxylase large chain (477 aa).

The propeptide occupies M1–S2. P3 carries the post-translational modification N-acetylproline. K14 is subject to N6,N6,N6-trimethyllysine. T173 provides a ligand contact to substrate. K175 (proton acceptor) is an active-site residue. A substrate-binding site is contributed by K177. Mg(2+)-binding residues include K201, D203, and E204. The residue at position 201 (K201) is an N6-carboxylysine. H294 functions as the Proton acceptor in the catalytic mechanism. Substrate contacts are provided by R295, H327, and S379.

Belongs to the RuBisCO large chain family. Type I subfamily. As to quaternary structure, heterohexadecamer of 8 large chains and 8 small chains; disulfide-linked. The disulfide link is formed within the large subunit homodimers. Requires Mg(2+) as cofactor. Post-translationally, the disulfide bond which can form in the large chain dimeric partners within the hexadecamer appears to be associated with oxidative stress and protein turnover.

It is found in the plastid. The protein localises to the chloroplast. The catalysed reaction is 2 (2R)-3-phosphoglycerate + 2 H(+) = D-ribulose 1,5-bisphosphate + CO2 + H2O. It catalyses the reaction D-ribulose 1,5-bisphosphate + O2 = 2-phosphoglycolate + (2R)-3-phosphoglycerate + 2 H(+). RuBisCO catalyzes two reactions: the carboxylation of D-ribulose 1,5-bisphosphate, the primary event in carbon dioxide fixation, as well as the oxidative fragmentation of the pentose substrate in the photorespiration process. Both reactions occur simultaneously and in competition at the same active site. The polypeptide is Ribulose bisphosphate carboxylase large chain (Gerbera jamesonii (Transvaal daisy)).